The sequence spans 299 residues: Non-homologous end joining protein Ku (299 aa).

In terms of domain architecture, Ku spans 10–188 (ISFGLVHIPV…TEAVTDARLT (179 aa)). 2 disordered regions span residues 227-249 (AGEG…SADV) and 261-299 (AGKS…GKAS). Positions 273–283 (AAKDKVADKQS) are enriched in basic and acidic residues. Residues 284–299 (PKPKRPAVRKKTGKAS) show a composition bias toward basic residues.

Belongs to the prokaryotic Ku family. In terms of assembly, homodimer. Interacts with LigD.

In terms of biological role, with LigD forms a non-homologous end joining (NHEJ) DNA repair enzyme, which repairs dsDNA breaks with reduced fidelity. Binds linear dsDNA with 5'- and 3'- overhangs but not closed circular dsDNA nor ssDNA. Recruits and stimulates the ligase activity of LigD. This Pseudomonas syringae pv. tomato (strain ATCC BAA-871 / DC3000) protein is Non-homologous end joining protein Ku.